We begin with the raw amino-acid sequence, 161 residues long: Nucleotide-binding protein XCV3791 (161 aa).

It belongs to the YajQ family.

Nucleotide-binding protein. This Xanthomonas euvesicatoria pv. vesicatoria (strain 85-10) (Xanthomonas campestris pv. vesicatoria) protein is Nucleotide-binding protein XCV3791.